Here is a 311-residue protein sequence, read N- to C-terminus: Pyrimidine-specific ribonucleoside hydrolase RihA (311 aa).

His-240 is a catalytic residue.

It belongs to the IUNH family. RihA subfamily.

Hydrolyzes with equal efficiency cytidine or uridine to ribose and cytosine or uracil, respectively. The polypeptide is Pyrimidine-specific ribonucleoside hydrolase RihA (Escherichia coli O45:K1 (strain S88 / ExPEC)).